Here is a 31-residue protein sequence, read N- to C-terminus: Photosystem II reaction center protein T (31 aa).

Residues Ser3 to Leu23 form a helical membrane-spanning segment.

The protein belongs to the PsbT family. PSII is composed of 1 copy each of membrane proteins PsbA, PsbB, PsbC, PsbD, PsbE, PsbF, PsbH, PsbI, PsbJ, PsbK, PsbL, PsbM, PsbT, PsbX, PsbY, PsbZ, Psb30/Ycf12, peripheral proteins PsbO, CyanoQ (PsbQ), PsbU, PsbV and a large number of cofactors. It forms dimeric complexes.

Its subcellular location is the cellular thylakoid membrane. In terms of biological role, found at the monomer-monomer interface of the photosystem II (PS II) dimer, plays a role in assembly and dimerization of PSII. PSII is a light-driven water plastoquinone oxidoreductase, using light energy to abstract electrons from H(2)O, generating a proton gradient subsequently used for ATP formation. The sequence is that of Photosystem II reaction center protein T from Synechococcus sp. (strain RCC307).